Reading from the N-terminus, the 350-residue chain is MKNIETILKLAEEKIVLVHNLKDLQEYKVEFLGRNGIVTSELKKLGSLINGQKRKEFGLKINTLKDKIHDIIKAKAQNLEAEELHLKLAADKIDLTIPARRYKQGSIHPITQCMDELIQVFSQFGFTIENGPNIENDFYNFTALNFEYDHPARQMHDTFYLKGHENDKPLLLRTHTSTVQIRAMKNGKPPFRFIAPGRTYRSDSDMTHTPMFHQIEGLVIDKNINMGHLKYVIITFIRSFFENSNIELRFRPSFFPFTEPSAEVDIRMNKNDKWLEVLGCGMVHPNVLKNIDINRSEYQGFAFGLGVERFAMLKYNIKDLRRFFEGDIRWLKHYNFESFDIPNLAGGLTK.

Glu-259 is a binding site for Mg(2+).

It belongs to the class-II aminoacyl-tRNA synthetase family. Phe-tRNA synthetase alpha subunit type 1 subfamily. In terms of assembly, tetramer of two alpha and two beta subunits. Mg(2+) serves as cofactor.

Its subcellular location is the cytoplasm. The enzyme catalyses tRNA(Phe) + L-phenylalanine + ATP = L-phenylalanyl-tRNA(Phe) + AMP + diphosphate + H(+). The chain is Phenylalanine--tRNA ligase alpha subunit (pheS) from Rickettsia prowazekii (strain Madrid E).